We begin with the raw amino-acid sequence, 639 residues long: Mediator of RNA polymerase II transcription subunit 17 (639 aa).

Belongs to the Mediator complex subunit 17 family. As to quaternary structure, component of the Mediator complex.

Its subcellular location is the nucleus. Component of the Mediator complex, a coactivator involved in the regulated transcription of nearly all RNA polymerase II-dependent genes. Mediator functions as a bridge to convey information from gene-specific regulatory proteins to the basal RNA polymerase II transcription machinery. Mediator is recruited to promoters by direct interactions with regulatory proteins and serves as a scaffold for the assembly of a functional preinitiation complex with RNA polymerase II and the general transcription factors. This is Mediator of RNA polymerase II transcription subunit 17 (med17) from Xenopus tropicalis (Western clawed frog).